The primary structure comprises 1062 residues: Histone H3-lysine(4) N-trimethyltransferase ATX1 (1062 aa).

The interval 159 to 184 is disordered; the sequence is NAFSGNKQNGSSRRKGSSSKNQDKAT. One can recognise a PWWP domain in the interval 301–365; the sequence is PGDIVWAKLA…VKQAISFIKG (65 aa). The segment at 401–424 is disordered; sequence QLQKGADSVDSDMANSTEEGNSGG. The 60-residue stretch at 441–500 folds into the FYR N-terminal domain; the sequence is DFRHIIGDLLIINLGKVVTDSQFFKDENHIWPEGYTAMRKFTSLTDHSASALYKMEVLRD. The 83-residue stretch at 504–586 folds into the FYR C-terminal domain; that stretch reads KTHPLFIVTA…RPSSHVSMCK (83 aa). Residues 591–647 form a Phorbol-ester/DAG-type zinc finger; that stretch reads RHQNQPTGYRPVRVDWKDLDKCNVCHMDEEYENNLFLQCDKCRMMVHAKCYGELEPC. Residues 599 to 1062 are interaction with PIP5; sequence YRPVRVDWKD…RCDLIDWTAE (464 aa). The segment at 609–660 adopts a PHD-type 1 zinc-finger fold; it reads LDKCNVCHMDEEYENNLFLQCDKCRMMVHAKCYGELEPCDGALWLCNLCRPG. A C2HC pre-PHD-type zinc finger spans residues 665-698; sequence PPRCCLCPVVGGAMKPTTDGRWAHLACAIWIPET. The PHD-type 2 zinc finger occupies 722 to 785; it reads LMCTICGVSY…RMLSFCKRHR (64 aa). An SET domain is found at 898-1016; that stretch reads KRLAFGKSGI…KWEELTYDYR (119 aa). Position 908 (His-908) interacts with S-adenosyl-L-methionine. Residue Ser-947 is glycosylated (O-linked (GlcNAc) serine). S-adenosyl-L-methionine contacts are provided by residues Tyr-954 and 977 to 978; that span reads NH. Cys-980, Cys-1026, Cys-1028, and Cys-1033 together coordinate Zn(2+). In terms of domain architecture, Post-SET spans 1022-1038; that stretch reads ERLSCSCGFPGCRGVVN.

This sequence belongs to the class V-like SAM-binding methyltransferase superfamily. Histone-lysine methyltransferase family. TRX/MLL subfamily. As to quaternary structure, interacts with PIP5. Interacts with WDR5A. Binds to CLF in the nucleus. Interacts with NRPB1 CTD domain, especially when NRPB1 is phosphorylated on 'Ser-5' of the heptapeptide repeat. Component of a nuclear protein complex containing at least TATA binding proteins (TBPs, e.g. TBP1 and TBP2) and ATX1. Associates with ULT1 for trimethylating 'Lys-4' on histone H3 (H3K4me3) at flower MADS box gene loci. Interacts with SEC. Interacts with A4/EF1A in the cytoplasm on the nuclear periphery. Activated via O-glycosylation by SEC; this modification triggers FLC locus H3K4me3 histone modification, thus preventing premature flowering. As to expression, strongly expressed in cotyledons, but weak levels in the first true leaves, except at the hydothodes. Ubiquitous with higher levels in dividing tissues, including inflorescence meristem and flower primordia. Expressed also in leaves (especially at hydathodes), in growing inflorescence stems and in the mature flowers. Strongly expressed in young seedlings.

It localises to the nucleus. The protein resides in the cytoplasm. Its subcellular location is the perinuclear region. The enzyme catalyses L-lysyl(4)-[histone H3] + 3 S-adenosyl-L-methionine = N(6),N(6),N(6)-trimethyl-L-lysyl(4)-[histone H3] + 3 S-adenosyl-L-homocysteine + 3 H(+). It catalyses the reaction L-lysyl-[protein] + 3 S-adenosyl-L-methionine = N(6),N(6),N(6)-trimethyl-L-lysyl-[protein] + 3 S-adenosyl-L-homocysteine + 3 H(+). Binds to the promoter and regulates the transcription of target genes, maintaining them in an active state; at promoters, required for TATA binding proteins (TBPs, e.g. TBP1 and TBP2) and RNA polymerase II (Pol II) recruitment, and, in a subsequent event, is recruited by a phosphorylated form of Pol II to the +300-bp region of transcribed sequences to trimethylates nucleosomes. Histone trimethyltransferase that trimethylates 'Lys-4' of histone H3 (H3K4me3); H3 'Lys-4' methylation represents a specific tag for epigenetic transcriptional activation and is required for efficient elongation of transcription but not for transcription initiation. Methylates only a limited fraction of nucleosomes of target genes (e.g. FLC, NAP, XTH33 and WRKY70). Necessary for WDR5A occupancy at WRKY70 and LTP7 genes. Required to maintain the active state of class A (AP1 and AP2), class B (PI and AP3) and class C (AG, AGAMOUS) floral homeotic genes at early stages of flower development. Together with CLF, modulates AG nucleosome methylation statement. Involved in epigenetic regulation (e.g. H3K4me3) of the floral repressors FLC, FT and SOC1 to prevent the transition from vegetative to reproductive development, independently of the photoperiod; binds the active FLC locus before flowering, but this interaction is released upon the transition to flowering. Regulates floral organ identity and flowering transition. Functions as a receptor for the lipid messenger phosphatidylinositol 5-phosphate (PI5P), which negatively regulates its transcriptional activation activity. Exhibits histone methylase activity and subsequent transcriptional regulation on WRKY70 gene, and, to a lower extent on secondary defense-response targets salicylic acid (SA)-responsive gene PR1 and jasmonic acid (JA)-responsive gene THI2.1. Involved in response to dehydration stress-response in both abscisic acid (ABA)-dependent and ABA-independent pathways; this includes specific genes (e.g. COR15A, ADH1, CBF4, RD29A, RD29B, RD26, ABF3, NCED3 and ABA3) epigenetic regulation (e.g. H3K4me3 and Pol II recruitment) to promote their transcription and influence ABA production. Implicated in stomatal closure regulation. Indirect repressor of XTH genes (XTH33). Necessary for the phosphorylation of Pol II NRPB1 (e.g. Ser5P and Ser2P) at the promoters of target genes, thus regulating both early and late stages of transcription. Controls root growth and architecture by regulating the timing of root development, stem cell niche maintenance (e.g. quiescent center (QC)), and cell patterning during primary and lateral root development. Modulates cell cycle duration, cell production, and the transition from cell proliferation in the root apical meristem (RAM) to cell elongation. Functionally, trimethylates A4/EF1A post-translationally at Lys-396. Required for actin cytoskeleton organization. This chain is Histone H3-lysine(4) N-trimethyltransferase ATX1, found in Arabidopsis thaliana (Mouse-ear cress).